A 168-amino-acid chain; its full sequence is Troponin I, cardiac muscle (168 aa).

A compositionally biased stretch (basic and acidic residues) spans 128 to 147 (VRKDDAEKESREVGDWRKNV). Residues 128–168 (VRKDDAEKESREVGDWRKNVDALSGMEGRKKKFEAPGGGQG) are disordered.

This sequence belongs to the troponin I family. As to quaternary structure, binds to actin and tropomyosin.

In terms of biological role, troponin I is the inhibitory subunit of troponin, the thin filament regulatory complex which confers calcium-sensitivity to striated muscle actomyosin ATPase activity. The protein is Troponin I, cardiac muscle (TNNI3) of Gallus gallus (Chicken).